The chain runs to 197 residues: Recombination protein RecR (197 aa).

Residues 56 to 71 form a C4-type zinc finger; it reads CSRCFNLSAEDPCDIC. Positions 79–174 constitute a Toprim domain; that stretch reads ETICVVAEPR…RVTRIAFGLP (96 aa).

It belongs to the RecR family.

Its function is as follows. May play a role in DNA repair. It seems to be involved in an RecBC-independent recombinational process of DNA repair. It may act with RecF and RecO. In Gloeobacter violaceus (strain ATCC 29082 / PCC 7421), this protein is Recombination protein RecR.